The following is a 270-amino-acid chain: Mediator of RNA polymerase II transcription subunit 4 (270 aa).

Positions 1-25 (MAAASSGEKEKERPGGGLGAAGGNS) are disordered. Ala-2 carries the post-translational modification N-acetylalanine. 2 coiled-coil regions span residues 24–48 (NSTR…IEML) and 90–131 (HHEM…AKEK). At Ser-32 the chain carries Phosphoserine. The tract at residues 231–270 (MLPPNHSHDFLLEPPGHNKENEDDVEVMSTDSSSSSSDSD) is disordered. Residues 236-250 (HSHDFLLEPPGHNKE) are compositionally biased toward basic and acidic residues. Residues 259-270 (STDSSSSSSDSD) show a composition bias toward low complexity.

It belongs to the Mediator complex subunit 4 family. Component of the Mediator complex, which is composed of MED1, MED4, MED6, MED7, MED8, MED9, MED10, MED11, MED12, MED13, MED13L, MED14, MED15, MED16, MED17, MED18, MED19, MED20, MED21, MED22, MED23, MED24, MED25, MED26, MED27, MED29, MED30, MED31, CCNC, CDK8 and CDC2L6/CDK11. The MED12, MED13, CCNC and CDK8 subunits form a distinct module termed the CDK8 module. Mediator containing the CDK8 module is less active than Mediator lacking this module in supporting transcriptional activation. Individual preparations of the Mediator complex lacking one or more distinct subunits have been variously termed ARC, CRSP, DRIP, PC2, SMCC and TRAP.

The protein resides in the nucleus. Its function is as follows. Component of the Mediator complex, a coactivator involved in the regulated transcription of nearly all RNA polymerase II-dependent genes. Mediator functions as a bridge to convey information from gene-specific regulatory proteins to the basal RNA polymerase II transcription machinery. Mediator is recruited to promoters by direct interactions with regulatory proteins and serves as a scaffold for the assembly of a functional preinitiation complex with RNA polymerase II and the general transcription factors. This Bos taurus (Bovine) protein is Mediator of RNA polymerase II transcription subunit 4 (MED4).